A 205-amino-acid chain; its full sequence is Recombination protein RecR (205 aa).

The segment at 60 to 75 (CKVCHNISDTETCQIC) adopts a C4-type zinc-finger fold. One can recognise a Toprim domain in the interval 83-178 (STVCVVENIR…KLSVIARGIS (96 aa)).

Belongs to the RecR family.

May play a role in DNA repair. It seems to be involved in an RecBC-independent recombinational process of DNA repair. It may act with RecF and RecO. This chain is Recombination protein RecR, found in Bacteroides thetaiotaomicron (strain ATCC 29148 / DSM 2079 / JCM 5827 / CCUG 10774 / NCTC 10582 / VPI-5482 / E50).